The chain runs to 22 residues: Oxygen-evolving enhancer protein 2 (22 aa).

Belongs to the PsbP family.

The protein resides in the plastid. Its subcellular location is the chloroplast thylakoid membrane. Functionally, may be involved in the regulation of photosystem II. The sequence is that of Oxygen-evolving enhancer protein 2 from Physcomitrium patens (Spreading-leaved earth moss).